The sequence spans 151 residues: 3-hydroxyacyl-[acyl-carrier-protein] dehydratase FabZ (151 aa).

Residue H49 is part of the active site.

It belongs to the thioester dehydratase family. FabZ subfamily.

The protein localises to the cytoplasm. It catalyses the reaction a (3R)-hydroxyacyl-[ACP] = a (2E)-enoyl-[ACP] + H2O. In terms of biological role, involved in unsaturated fatty acids biosynthesis. Catalyzes the dehydration of short chain beta-hydroxyacyl-ACPs and long chain saturated and unsaturated beta-hydroxyacyl-ACPs. The sequence is that of 3-hydroxyacyl-[acyl-carrier-protein] dehydratase FabZ from Bordetella petrii (strain ATCC BAA-461 / DSM 12804 / CCUG 43448).